A 120-amino-acid chain; its full sequence is NAD(P)H-quinone oxidoreductase subunit 3, chloroplastic (120 aa).

Helical transmembrane passes span I9 to G29, M64 to M84, and V88 to L108.

This sequence belongs to the complex I subunit 3 family. NDH is composed of at least 16 different subunits, 5 of which are encoded in the nucleus.

The protein resides in the plastid. It is found in the chloroplast thylakoid membrane. The catalysed reaction is a plastoquinone + NADH + (n+1) H(+)(in) = a plastoquinol + NAD(+) + n H(+)(out). It catalyses the reaction a plastoquinone + NADPH + (n+1) H(+)(in) = a plastoquinol + NADP(+) + n H(+)(out). In terms of biological role, NDH shuttles electrons from NAD(P)H:plastoquinone, via FMN and iron-sulfur (Fe-S) centers, to quinones in the photosynthetic chain and possibly in a chloroplast respiratory chain. The immediate electron acceptor for the enzyme in this species is believed to be plastoquinone. Couples the redox reaction to proton translocation, and thus conserves the redox energy in a proton gradient. In Barbarea verna (Land cress), this protein is NAD(P)H-quinone oxidoreductase subunit 3, chloroplastic.